Here is a 637-residue protein sequence, read N- to C-terminus: Biosynthetic arginine decarboxylase (637 aa).

Lys101 is modified (N6-(pyridoxal phosphate)lysine). 286–296 (FDVGGGLAVDY) lines the substrate pocket.

Belongs to the Orn/Lys/Arg decarboxylase class-II family. SpeA subfamily. Requires Mg(2+) as cofactor. The cofactor is pyridoxal 5'-phosphate.

It carries out the reaction L-arginine + H(+) = agmatine + CO2. It participates in amine and polyamine biosynthesis; agmatine biosynthesis; agmatine from L-arginine: step 1/1. Its function is as follows. Catalyzes the biosynthesis of agmatine from arginine. The polypeptide is Biosynthetic arginine decarboxylase (Shewanella putrefaciens (strain CN-32 / ATCC BAA-453)).